The sequence spans 253 residues: MSKSDVFHLGLTKNDLQGATLAIVPGDPERVEKIAALMDKPVKLASHREFTSWRAELDGKPVIVCSTGIGGPSTSIAVEELAHVGVRTFLRIGTTGAIQPHINVGDVLVTTGSVRLDGASLHFAPMEFPAVADFACTTALVEAAKSIGATTHIGVTASSDTFYPGQERYDTFSGRVVSRFKGSMEEWQAMGVMNYEMESATLLTMCASQGLRAGMVAGVIVNRTQQEIPNAETMKQTESHAVKIVVEAARRLL.

Belongs to the PNP/UDP phosphorylase family. As to quaternary structure, homohexamer.

Its subcellular location is the cytoplasm. The enzyme catalyses uridine + phosphate = alpha-D-ribose 1-phosphate + uracil. The protein operates within pyrimidine metabolism; UMP biosynthesis via salvage pathway; uracil from uridine (phosphorylase route): step 1/1. In terms of biological role, catalyzes the reversible phosphorylytic cleavage of uridine to uracil and ribose-1-phosphate. The chain is Uridine phosphorylase (udp) from Klebsiella aerogenes (Enterobacter aerogenes).